Consider the following 297-residue polypeptide: 3-methyl-2-oxobutanoate hydroxymethyltransferase (297 aa).

Polar residues predominate over residues 1–15; sequence MSEQISEQSEQNVYG. Residues 1-40 form a disordered region; sequence MSEQISEQSEQNVYGASSPVPAGESSPSAASAPRTKVRTH. A compositionally biased stretch (low complexity) spans 16 to 33; that stretch reads ASSPVPAGESSPSAASAP. Residues Asp-78 and Asp-117 each coordinate Mg(2+). Residues 78 to 79, Asp-117, and Lys-147 each bind 3-methyl-2-oxobutanoate; that span reads DS. Position 149 (Glu-149) interacts with Mg(2+). Glu-215 serves as the catalytic Proton acceptor.

The protein belongs to the PanB family. As to quaternary structure, homodecamer; pentamer of dimers. Mg(2+) serves as cofactor.

The protein resides in the cytoplasm. The enzyme catalyses 3-methyl-2-oxobutanoate + (6R)-5,10-methylene-5,6,7,8-tetrahydrofolate + H2O = 2-dehydropantoate + (6S)-5,6,7,8-tetrahydrofolate. It participates in cofactor biosynthesis; (R)-pantothenate biosynthesis; (R)-pantoate from 3-methyl-2-oxobutanoate: step 1/2. Its function is as follows. Catalyzes the reversible reaction in which hydroxymethyl group from 5,10-methylenetetrahydrofolate is transferred onto alpha-ketoisovalerate to form ketopantoate. This is 3-methyl-2-oxobutanoate hydroxymethyltransferase from Mycobacterium marinum (strain ATCC BAA-535 / M).